The following is a 301-amino-acid chain: Zinc finger protein 346 (301 aa).

Matrin-type zinc fingers lie at residues 55-85 (SQCKVCSAVLISESQKLAHYQSKKHASKVRR) and 117-141 (KACSVCNMTFSSPVVAQSHYQGKVH). Zn(2+) is bound by residues C57, C60, H73, H79, C119, C122, H135, and H141. Residues 151 to 177 (GSQTPALPQPEAQAKKDDGMQGPAEQD) form a disordered region. 2 Matrin-type zinc fingers span residues 180 to 210 (RFCSICQASFNNPLMAQQHYSGKKHKKHMNK) and 230 to 257 (YPCTVCNIELNSVEQYQAHISGSKHKNH). Residues 250 to 283 (SGSKHKNHAKPKKGPNAFAPPPDNYQPDYQYPTN) are disordered. Basic residues predominate over residues 251 to 262 (GSKHKNHAKPKK).

The protein localises to the nucleus. It is found in the cytoplasm. Functionally, binds preferentially to dsRNA, but also to RNA-DNA hybrids. This Danio rerio (Zebrafish) protein is Zinc finger protein 346.